The sequence spans 504 residues: Maturase K (504 aa).

Belongs to the intron maturase 2 family. MatK subfamily.

The protein resides in the plastid. It is found in the chloroplast. Its function is as follows. Usually encoded in the trnK tRNA gene intron. Probably assists in splicing its own and other chloroplast group II introns. This is Maturase K from Lupinus argenteus (Silvery lupine).